A 174-amino-acid polypeptide reads, in one-letter code: MTYALFLLSVILVMGFVGFSSKPSPIYGGLVLIISGAVGCAVILNCGGGYMGLMVFLIYLGGMMVVFGYTTAMAIEEYPEAWGSGVEVLVSVLVGLVMEVGLVLWVKEYDGVVVVVNFNSVGSWMIYEGEGSGLIREDPIGAGALYDYGRWLVVVTGWTLFVGVYVVIEIARGN.

The next 6 membrane-spanning stretches (helical) occupy residues 1-21 (MTYA…GFSS), 24-44 (SPIY…AVIL), 47-67 (GGGY…MVVF), 86-106 (VEVL…VLWV), 111-131 (GVVV…EGEG), and 151-171 (WLVV…IEIA).

This sequence belongs to the complex I subunit 6 family. In terms of assembly, core subunit of respiratory chain NADH dehydrogenase (Complex I) which is composed of 45 different subunits.

It localises to the mitochondrion inner membrane. The catalysed reaction is a ubiquinone + NADH + 5 H(+)(in) = a ubiquinol + NAD(+) + 4 H(+)(out). Its function is as follows. Core subunit of the mitochondrial membrane respiratory chain NADH dehydrogenase (Complex I) which catalyzes electron transfer from NADH through the respiratory chain, using ubiquinone as an electron acceptor. Essential for the catalytic activity and assembly of complex I. The polypeptide is NADH-ubiquinone oxidoreductase chain 6 (MT-ND6) (Pongo abelii (Sumatran orangutan)).